Here is a 339-residue protein sequence, read N- to C-terminus: MTAAAPSQQRPAAARARNLPWVEKYRPQTLADLISHQDILSTIQKFISEDRLPHLLLYGPPGTGKTSTILACAKQLYKDKEFGSMVLELNASDDRGIDIVRGPILSFASTRTIFKKGFKLVILDEADAMTQDAQNALRRVIEKFTENTRFCLICNYLSKIIPALQSRCTRFRFGPLTPELMVPRLEHVVQEENVDISEDGMKALVTLSSGDMRRALNILQSTNMAFGKVTEETVYTCTGHPLKTDIANILDWMLNQDFTTAYKNIMELKTLKGLALHDILTEVHLFVHRVDFPSSVRIHLLTKMADIEYRLSVGTSEKIQLSSLIAAFQVTRDLIVAEA.

Residue 59 to 66 coordinates ATP; that stretch reads GPPGTGKT.

It belongs to the activator 1 small subunits family. In terms of assembly, subunit of the RFC complex, an heteropentameric complex consisting of a large subunit RFC1 and four small subunits RFC2, RFC3, RFC4 and RFC5; the RFC complex interacts with PCNA. Forms an heterotetrameric complex with RFC2, RFC3 and RFC4; this complex has ATPase activity but is not stimulated by PCNA. The heterotetramer of subunits RFC2, RFC3, RFC4 and RFC5 interacts with RAD17.

The protein resides in the nucleus. In terms of biological role, subunit of the replication factor C (RFC) complex which acts during elongation of primed DNA templates by DNA polymerases delta and epsilon, and is necessary for ATP-dependent loading of proliferating cell nuclear antigen (PCNA) onto primed DNA. This chain is Replication factor C subunit 5 (Rfc5), found in Mus musculus (Mouse).